Here is a 304-residue protein sequence, read N- to C-terminus: Thyroxine 5-deiodinase (304 aa).

The tract at residues 1 to 23 is disordered; it reads MPRQATSRLVVGEGEGSQGASGP. The Cytoplasmic portion of the chain corresponds to 1–44; that stretch reads MPRQATSRLVVGEGEGSQGASGPAATMLRSLLLHSLRLCAQTAS. The helical; Signal-anchor for type II membrane protein transmembrane segment at 45-67 threads the bilayer; the sequence is CLVLFPRFLGTAFMLWLLDFLCI. Residues 68 to 304 are Extracellular-facing; that stretch reads RKHFLGRRRR…QLHGARPRRV (237 aa). The segment at 78–99 is disordered; it reads GQPEPEVELNSEGEEVPPDDPP. Residues 82–95 are compositionally biased toward acidic residues; the sequence is PEVELNSEGEEVPP. The active site involves Sec-170. Position 170 (Sec-170) is a non-standard amino acid, selenocysteine.

It belongs to the iodothyronine deiodinase family. In terms of assembly, monomer. Homodimer. May undergo minor heretodimerization with DIO1 and DIO2. As to expression, expressed in placenta and several fetal tissues.

It is found in the cell membrane. Its subcellular location is the endosome membrane. It catalyses the reaction 3,3',5'-triiodo-L-thyronine + iodide + A + H(+) = L-thyroxine + AH2. The catalysed reaction is 3,3'-diiodo-L-thyronine + iodide + A + H(+) = 3,3',5-triiodo-L-thyronine + AH2. It carries out the reaction 3-iodo-L-thyronine + iodide + A + H(+) = 3,5-diiodo-L-thyronine + AH2. The enzyme catalyses L-thyronine + iodide + A + H(+) = 3-iodo-L-thyronine + AH2. It catalyses the reaction 3',5'-diiodo-L-thyronine + iodide + A + H(+) = 3,3',5'-triiodo-L-thyronine + AH2. The catalysed reaction is 3'-iodo-L-thyronine + iodide + A + H(+) = 3,3'-diiodo-L-thyronine + AH2. It carries out the reaction 3,3',5'-triiodothyronamine + iodide + A + H(+) = 3,3',5,5'-tetraiodothyronamine + AH2. The enzyme catalyses 3',5'-diiodothyronamine + iodide + A + H(+) = 3,3',5'-triiodothyronamine + AH2. It catalyses the reaction 3,3'-diiodothyronamine + iodide + A + H(+) = 3,3',5-triiodothyronamine + AH2. The catalysed reaction is 3-iodothyronamine + iodide + A + H(+) = 3,5-diiodothyronamine + AH2. It carries out the reaction 3'-iodothyronamine + iodide + A + H(+) = 3,3'-diiodothyronamine + AH2. The enzyme catalyses thyronamine + iodide + A + H(+) = 3-iodothyronamine + AH2. Plays a crucial role in the metabolism of thyroid hormones (TH) and has specific roles in TH activation and inactivation by deiodination. Catalyzes the deiodination of L-thyroxine (T4) to 3,3',5'-triiodothyronine (rT3), 3,5,3'-triiodothyronine (T3) to 3,3'-diiodothyronine (3,3'-T2), 3,5-diiodothyronine (3,5-T2) to 3-monoiodothyronine (3-T1), rT3 to 3',5'-diiodothyronine (3',5'-T2) and 3,3'-T2 to 3'-monoiodothyronine (3'-T1) via inner-ring deiodination (IRD). Catalyzes the deiodination of 3-T1 to L-thyronine (T0) via outer-ring deiodination (ORD). Catalyzes the tyrosyl ring deiodinations of 3,3',5,5'-tetraiodothyronamine, 3,3',5'-triiodothyronamine, 3,5,3'-triiodothyronamine, 3,5-diiodothyronamine, 3,3'-diiodothyronamine and 3-iodothyronamine. The protein is Thyroxine 5-deiodinase (DIO3) of Homo sapiens (Human).